A 358-amino-acid chain; its full sequence is tRNA-specific 2-thiouridylase MnmA (358 aa).

ATP contacts are provided by residues 6–13 (ALSGGVDS) and methionine 32. Cysteine 103 functions as the Nucleophile in the catalytic mechanism. An intrachain disulfide couples cysteine 103 to cysteine 201. Glycine 127 is a binding site for ATP. Positions 151-153 (KDQ) are interaction with tRNA. Residue cysteine 201 is the Cysteine persulfide intermediate of the active site.

This sequence belongs to the MnmA/TRMU family.

The protein localises to the cytoplasm. The catalysed reaction is S-sulfanyl-L-cysteinyl-[protein] + uridine(34) in tRNA + AH2 + ATP = 2-thiouridine(34) in tRNA + L-cysteinyl-[protein] + A + AMP + diphosphate + H(+). Its function is as follows. Catalyzes the 2-thiolation of uridine at the wobble position (U34) of tRNA, leading to the formation of s(2)U34. The chain is tRNA-specific 2-thiouridylase MnmA from Thermotoga neapolitana (strain ATCC 49049 / DSM 4359 / NBRC 107923 / NS-E).